The primary structure comprises 427 residues: GPI mannosyltransferase 2 (427 aa).

The next 8 helical transmembrane spans lie at 7–27, 119–139, 164–184, 197–217, 247–267, 318–338, 350–370, and 404–424; these read LTTV…FAPG, ATLL…ALTL, FLLA…GMLL, ITLA…FSVA, AVLF…YMHY, VPNF…TVYF, LVYI…VQII, and LYVN…ACFL.

This sequence belongs to the PIGV family.

It localises to the endoplasmic reticulum membrane. It functions in the pathway glycolipid biosynthesis; glycosylphosphatidylinositol-anchor biosynthesis. In terms of biological role, mannosyltransferase involved in glycosylphosphatidylinositol-anchor biosynthesis. Transfers the second mannose to the glycosylphosphatidylinositol during GPI precursor assembly. The protein is GPI mannosyltransferase 2 (GPI18) of Eremothecium gossypii (strain ATCC 10895 / CBS 109.51 / FGSC 9923 / NRRL Y-1056) (Yeast).